We begin with the raw amino-acid sequence, 38 residues long: GVPINVSCTGSPQCIKPCKDAGMRFGKCMNRKCHCTPK.

3 disulfide bridges follow: Cys8–Cys28, Cys14–Cys33, and Cys18–Cys35.

It belongs to the short scorpion toxin superfamily. Potassium channel inhibitor family. Alpha-KTx 03 subfamily. In terms of tissue distribution, expressed by the venom gland.

The protein resides in the secreted. Its function is as follows. Potent inhibitor of the Shaker potassium channels and its mammalian homologs (Kv1.1/KCNA1, Kv1.3/KCNA3, Kv1.6/KCNA6) (Ki&lt;1 nM for all channels). Also blocks Kv1.2/KCNA2 (IC(50)=26.8 nM). It also shows a weak interaction with nicotinic acetylcholine receptors (nAChR), suggesting it may weakly inhibit it. The polypeptide is Potassium channel toxin alpha-KTx 3.2 (Leiurus hebraeus (Hebrew deathstalker scorpion)).